A 404-amino-acid polypeptide reads, in one-letter code: Rhomboid-related protein 3 (404 aa).

EF-hand domains follow at residues 34–69 (APED…HSSK) and 70–105 (LDPH…KRSN). A run of 7 helical transmembrane segments spans residues 164–184 (WFMI…GVSL), 218–238 (IFMH…LLVG), 250–270 (IGLV…VADM), 274–294 (VVGS…NIVM), 303–325 (FKLL…AVWL), 338–358 (PSFV…VVVL), and 371–391 (WWIF…WNIF). Catalysis depends on S278, which acts as the Nucleophile. Residue H343 is part of the active site.

This sequence belongs to the peptidase S54 family.

It localises to the membrane. It catalyses the reaction Cleaves type-1 transmembrane domains using a catalytic dyad composed of serine and histidine that are contributed by different transmembrane domains.. May be involved in regulated intramembrane proteolysis and the subsequent release of functional polypeptides from their membrane anchors. The polypeptide is Rhomboid-related protein 3 (RHBDL3) (Homo sapiens (Human)).